A 218-amino-acid polypeptide reads, in one-letter code: Histidine biosynthesis bifunctional protein HisIE (218 aa).

A phosphoribosyl-AMP cyclohydrolase region spans residues Met-1 to Thr-118. Positions Leu-119–Gly-218 are phosphoribosyl-ATP pyrophosphohydrolase.

The protein in the N-terminal section; belongs to the PRA-CH family. This sequence in the C-terminal section; belongs to the PRA-PH family.

It localises to the cytoplasm. The catalysed reaction is 1-(5-phospho-beta-D-ribosyl)-ATP + H2O = 1-(5-phospho-beta-D-ribosyl)-5'-AMP + diphosphate + H(+). It carries out the reaction 1-(5-phospho-beta-D-ribosyl)-5'-AMP + H2O = 1-(5-phospho-beta-D-ribosyl)-5-[(5-phospho-beta-D-ribosylamino)methylideneamino]imidazole-4-carboxamide. Its pathway is amino-acid biosynthesis; L-histidine biosynthesis; L-histidine from 5-phospho-alpha-D-ribose 1-diphosphate: step 2/9. It participates in amino-acid biosynthesis; L-histidine biosynthesis; L-histidine from 5-phospho-alpha-D-ribose 1-diphosphate: step 3/9. The sequence is that of Histidine biosynthesis bifunctional protein HisIE (hisI) from Deinococcus radiodurans (strain ATCC 13939 / DSM 20539 / JCM 16871 / CCUG 27074 / LMG 4051 / NBRC 15346 / NCIMB 9279 / VKM B-1422 / R1).